A 40-amino-acid chain; its full sequence is Photosystem II reaction center protein L (40 aa).

A helical transmembrane segment spans residues 19-39; sequence SLYWGLLLIFVLAVLFSNYFF.

The protein belongs to the PsbL family. PSII is composed of 1 copy each of membrane proteins PsbA, PsbB, PsbC, PsbD, PsbE, PsbF, PsbH, PsbI, PsbJ, PsbK, PsbL, PsbM, PsbT, PsbX, PsbY, PsbZ, Psb30/Ycf12, at least 3 peripheral proteins of the oxygen-evolving complex and a large number of cofactors. It forms dimeric complexes.

It is found in the plastid. The protein resides in the chloroplast thylakoid membrane. Functionally, one of the components of the core complex of photosystem II (PSII). PSII is a light-driven water:plastoquinone oxidoreductase that uses light energy to abstract electrons from H(2)O, generating O(2) and a proton gradient subsequently used for ATP formation. It consists of a core antenna complex that captures photons, and an electron transfer chain that converts photonic excitation into a charge separation. This subunit is found at the monomer-monomer interface and is required for correct PSII assembly and/or dimerization. The polypeptide is Photosystem II reaction center protein L (Nandina domestica (Heavenly bamboo)).